The chain runs to 258 residues: Deoxyribose-phosphate aldolase (258 aa).

Residue Asp-102 is the Proton donor/acceptor of the active site. Residue Lys-165 is the Schiff-base intermediate with acetaldehyde of the active site. Lys-199 serves as the catalytic Proton donor/acceptor.

The protein belongs to the DeoC/FbaB aldolase family. DeoC type 2 subfamily.

It is found in the cytoplasm. The enzyme catalyses 2-deoxy-D-ribose 5-phosphate = D-glyceraldehyde 3-phosphate + acetaldehyde. It participates in carbohydrate degradation; 2-deoxy-D-ribose 1-phosphate degradation; D-glyceraldehyde 3-phosphate and acetaldehyde from 2-deoxy-alpha-D-ribose 1-phosphate: step 2/2. Its function is as follows. Catalyzes a reversible aldol reaction between acetaldehyde and D-glyceraldehyde 3-phosphate to generate 2-deoxy-D-ribose 5-phosphate. The protein is Deoxyribose-phosphate aldolase of Aliivibrio fischeri (strain MJ11) (Vibrio fischeri).